The primary structure comprises 597 residues: Putative Xaa-Pro dipeptidyl-peptidase (597 aa).

Residues serine 224, aspartate 336, and histidine 367 each act as charge relay system in the active site.

The protein belongs to the peptidase S15 family.

The catalysed reaction is Hydrolyzes Xaa-Pro-|- bonds to release unblocked, N-terminal dipeptides from substrates including Ala-Pro-|-p-nitroanilide and (sequentially) Tyr-Pro-|-Phe-Pro-|-Gly-Pro-|-Ile.. The polypeptide is Putative Xaa-Pro dipeptidyl-peptidase (Bacillus anthracis).